Here is a 299-residue protein sequence, read N- to C-terminus: HTH-type transcriptional regulator ArgP (299 aa).

The region spanning 4–60 (LDYKLLLALDAVMQEQNFERAAQRLHITQSAISQRIKQLEQQFAEPLLIRSQPLQAT) is the HTH lysR-type domain. Positions 21–40 (FERAAQRLHITQSAISQRIK) form a DNA-binding region, H-T-H motif.

It belongs to the LysR transcriptional regulatory family. As to quaternary structure, homodimer.

Controls the transcription of genes involved in arginine and lysine metabolism. This Aeromonas salmonicida protein is HTH-type transcriptional regulator ArgP.